We begin with the raw amino-acid sequence, 537 residues long: MFS-type transporter qa-x (537 aa).

The Cytoplasmic segment spans residues 1 to 26 (MTLLALKEDRPTPKAVYNWRVYTCAA). The helical transmembrane segment at 27 to 47 (IASFASCMIGYDSAFIGTTLA) threads the bilayer. The Extracellular portion of the chain corresponds to 48 to 74 (LPSFTKEFDFASYTPGALALLQSNIVS). The chain crosses the membrane as a helical span at residues 75 to 95 (VYQAGAFFGCLFAYATSYFLG). The Cytoplasmic segment spans residues 96 to 98 (RRK). The chain crosses the membrane as a helical span at residues 99-119 (SLIAFSVVFIIGAAIMLAADG). Topologically, residues 120-131 (QGRGIDPIIAGR) are extracellular. Residues 132–152 (VLAGIGVGGASNMVPIYISEL) traverse the membrane as a helical segment. Topologically, residues 153-160 (APPAVRGR) are cytoplasmic. Residues 161 to 181 (LVGIYELGWQIGGLVGFWINY) form a helical membrane-spanning segment. At 182-195 (GVNTTMAPTRSQWL) the chain is on the extracellular side. N184 carries N-linked (GlcNAc...) asparagine glycosylation. A helical transmembrane segment spans residues 196-216 (IPFAVQLIPAGLLFLGSFWIP). The Cytoplasmic portion of the chain corresponds to 217–285 (ESPRWLYANG…SLKQRKVQWR (69 aa)). A helical transmembrane segment spans residues 286-306 (FFLGGMLFFWQNGSGINAINY). Residues 307 to 327 (YSPTVFRSIGITGTDTGFLTT) lie on the Extracellular side of the membrane. Residues 328 to 349 (GIFGVVKMVLTIIWLLWLVDLV) form a helical membrane-spanning segment. Residues 350 to 352 (GRR) lie on the Cytoplasmic side of the membrane. A helical membrane pass occupies residues 353–373 (RILFIGAAGGSLCMWFIGAYI). Topologically, residues 374–389 (KIADPGSNKAEDAKLT) are extracellular. Residues 390–410 (SGGIAAIFFFYLWTAFYTPSW) form a helical membrane-spanning segment. At 411 to 435 (NGTPWVINSEMFDQNTRSLGQASAA) the chain is on the cytoplasmic side. A helical transmembrane segment spans residues 436 to 456 (ANNWFWNFIISRFTPQMFIKM). At 457–458 (EY) the chain is on the extracellular side. The helical transmembrane segment at 459-479 (GVYFFFASLMLLSIVFIYFFL) threads the bilayer. Over 480 to 537 (PETKSIPLEAMDRLFEIKPVQNANKNLMAELNFDRNPEREESSSLDDKDRVTQTENAV) the chain is Cytoplasmic. The span at 514 to 531 (RNPEREESSSLDDKDRVT) shows a compositional bias: basic and acidic residues. Residues 514–537 (RNPEREESSSLDDKDRVTQTENAV) are disordered.

Belongs to the major facilitator superfamily. Sugar transporter (TC 2.A.1.1) family.

The protein localises to the membrane. MFS-type transporter; part of the qa gene cluster that mediates the catabolism of quinic acid (QA) and as such, allows the use of QA as a sole carbon source. Involved in the upatke of QA. The qa cluster encodes 3 inducible enymes (qa-2, qa-3 and qa-4) catalyzing the first three reactions in the catabolism of quinic acid to protocatechuic acid (also known as 3,4-Dihydroxybenzoic acid). This Neurospora crassa (strain ATCC 24698 / 74-OR23-1A / CBS 708.71 / DSM 1257 / FGSC 987) protein is MFS-type transporter qa-x.